A 676-amino-acid chain; its full sequence is Translation initiation factor IF-2, mitochondrial (676 aa).

The 184-residue stretch at lysine 143 to lysine 326 folds into the tr-type G domain. Positions glycine 152–threonine 159 are G1. Glycine 152–threonine 159 is a GTP binding site. Positions glycine 177–histidine 181 are G2. Residues aspartate 200 to glycine 203 and threonine 254 to aspartate 257 each bind GTP. Residues aspartate 200–glycine 203 are G3. The interval threonine 254–aspartate 257 is G4. The G5 stretch occupies residues serine 296 to lysine 298.

It belongs to the TRAFAC class translation factor GTPase superfamily. Classic translation factor GTPase family. IF-2 subfamily.

It localises to the mitochondrion. In terms of biological role, one of the essential components for the initiation of protein synthesis. Protects formylmethionyl-tRNA from spontaneous hydrolysis and promotes its binding to the 30S ribosomal subunits. Also involved in the hydrolysis of GTP during the formation of the 70S ribosomal complex. This Saccharomyces cerevisiae (strain ATCC 204508 / S288c) (Baker's yeast) protein is Translation initiation factor IF-2, mitochondrial (IFM1).